Reading from the N-terminus, the 533-residue chain is Cytochrome P450 9e2 (533 aa).

Cys-475 is a binding site for heme.

This sequence belongs to the cytochrome P450 family. Requires heme as cofactor.

It localises to the endoplasmic reticulum membrane. It is found in the microsome membrane. This Blattella germanica (German cockroach) protein is Cytochrome P450 9e2 (CYP9E2).